The sequence spans 227 residues: Protein p26 (227 aa).

Self-associates.

The protein resides in the host cell junction. It localises to the host plasmodesma. The sequence is that of Protein p26 from Lettuce infectious yellows virus (isolate United States/92) (LIYV).